Consider the following 268-residue polypeptide: Virulence plasmid ParA family protein pGP5-D (268 aa).

13-20 contacts ATP; that stretch reads FKGGTGKT.

It belongs to the ParA family.

The chain is Virulence plasmid ParA family protein pGP5-D from Chlamydia muridarum (strain MoPn / Nigg).